A 205-amino-acid chain; its full sequence is Small heat shock protein hspG12 (205 aa).

In terms of domain architecture, sHSP spans 35 to 205 (KTIIDILPPM…YSNTIKININ (171 aa)). Positions 99–147 (PSLLDTKEDEASIEEFDEDDIKPKSTETTSTLSNSKENKKDENKSKSTE) are disordered. Acidic residues predominate over residues 109–118 (ASIEEFDEDD). A compositionally biased stretch (basic and acidic residues) spans 134-147 (KENKKDENKSKSTE).

Belongs to the small heat shock protein (HSP20) family.

This chain is Small heat shock protein hspG12 (hspG12), found in Dictyostelium discoideum (Social amoeba).